A 180-amino-acid polypeptide reads, in one-letter code: MTNRLKEKYVKEMTPALIEKFNYTSSMQVPKIEKIVLNMGVGDAVSNAKNLDKAVEELGLIAGQKPLITKAKKSIAGFRLREGMPIGAKVTLRGERMYDFLDKLVNVSLPRVRDFHGVSAKSFDGRGNYTLGVREQLIFPEIDYDKVDRVRGLDVVIVTTSNTDEEARELLTQFGMPFAK.

The protein belongs to the universal ribosomal protein uL5 family. As to quaternary structure, part of the 50S ribosomal subunit; part of the 5S rRNA/L5/L18/L25 subcomplex. Contacts the 5S rRNA and the P site tRNA. Forms a bridge to the 30S subunit in the 70S ribosome.

In terms of biological role, this is one of the proteins that bind and probably mediate the attachment of the 5S RNA into the large ribosomal subunit, where it forms part of the central protuberance. In the 70S ribosome it contacts protein S13 of the 30S subunit (bridge B1b), connecting the 2 subunits; this bridge is implicated in subunit movement. Contacts the P site tRNA; the 5S rRNA and some of its associated proteins might help stabilize positioning of ribosome-bound tRNAs. The chain is Large ribosomal subunit protein uL5 from Latilactobacillus sakei subsp. sakei (strain 23K) (Lactobacillus sakei subsp. sakei).